Here is a 700-residue protein sequence, read N- to C-terminus: Elongation factor G (700 aa).

One can recognise a tr-type G domain in the interval 10–286 (NKVRNIGIMA…AVIDYLPNPL (277 aa)). GTP is bound by residues 19–26 (AHIDAGKT), 83–87 (DTPGH), and 137–140 (NKMD).

This sequence belongs to the TRAFAC class translation factor GTPase superfamily. Classic translation factor GTPase family. EF-G/EF-2 subfamily.

The protein localises to the cytoplasm. Catalyzes the GTP-dependent ribosomal translocation step during translation elongation. During this step, the ribosome changes from the pre-translocational (PRE) to the post-translocational (POST) state as the newly formed A-site-bound peptidyl-tRNA and P-site-bound deacylated tRNA move to the P and E sites, respectively. Catalyzes the coordinated movement of the two tRNA molecules, the mRNA and conformational changes in the ribosome. The chain is Elongation factor G from Rhodococcus jostii (strain RHA1).